The sequence spans 502 residues: L-ornithine N(5)-monooxygenase (502 aa).

The span at methionine 1–isoleucine 10 shows a compositional bias: basic and acidic residues. Residues methionine 1 to alanine 34 form a disordered region. Over residues arginine 13–serine 26 the composition is skewed to polar residues. FAD-binding positions include glutamate 83–histidine 91 and glutamine 102. Position 107 (lysine 107) interacts with substrate. Residue valine 168 coordinates FAD. NADP(+) is bound by residues serine 254–serine 257 and arginine 279. Substrate contacts are provided by residues asparagine 293–phenylalanine 296 and asparagine 323. Residue asparagine 323–serine 325 coordinates NADP(+). Serine 466–leucine 468 contributes to the FAD binding site. Serine 469 is a substrate binding site.

Belongs to the lysine N(6)-hydroxylase/L-ornithine N(5)-oxygenase family. As to quaternary structure, homotetramer. It depends on FAD as a cofactor.

It catalyses the reaction L-ornithine + NADPH + O2 = N(5)-hydroxy-L-ornithine + NADP(+) + H2O. The enzyme catalyses L-ornithine + NADH + O2 = N(5)-hydroxy-L-ornithine + NAD(+) + H2O. The protein operates within siderophore biosynthesis. In terms of biological role, catalyzes the conversion of L-ornithine to N(5)-hydroxyornithine, the first step in the biosynthesis of all hydroxamate-containing siderophores, such as deferriferrichrysin. In Aspergillus oryzae (strain ATCC 42149 / RIB 40) (Yellow koji mold), this protein is L-ornithine N(5)-monooxygenase.